We begin with the raw amino-acid sequence, 456 residues long: Exodeoxyribonuclease 7 large subunit (456 aa).

This sequence belongs to the XseA family. In terms of assembly, heterooligomer composed of large and small subunits.

The protein resides in the cytoplasm. The enzyme catalyses Exonucleolytic cleavage in either 5'- to 3'- or 3'- to 5'-direction to yield nucleoside 5'-phosphates.. Functionally, bidirectionally degrades single-stranded DNA into large acid-insoluble oligonucleotides, which are then degraded further into small acid-soluble oligonucleotides. The polypeptide is Exodeoxyribonuclease 7 large subunit (Azotobacter vinelandii (strain DJ / ATCC BAA-1303)).